The primary structure comprises 314 residues: Mitotic checkpoint protein BUB3.3 (314 aa).

7 WD repeats span residues 11 to 50 (PIED…LSLE), 52 to 90 (NSQA…VDTI), 92 to 131 (RHDD…SLVF), 134 to 173 (DAGG…QSYA), 176 to 215 (VEVP…SEIK), 229 to 269 (LDGV…RLNE), and 272 to 311 (RYSN…QVFI).

This sequence belongs to the WD repeat BUB3 family. In terms of assembly, part of the mitotic checkpoint complex (MCC).

It is found in the nucleus. Its subcellular location is the chromosome. It localises to the centromere. The protein localises to the kinetochore. The protein resides in the cytoplasm. It is found in the cytoskeleton. Its subcellular location is the phragmoplast. It localises to the spindle. Its function is as follows. Has a dual function in spindle-assembly checkpoint signaling and in promoting the establishment of correct kinetochore-microtubule (K-MT) attachments. Promotes the formation of stable end-on bipolar attachments. Necessary for kinetochore localization of BUB1. The BUB1/BUB3 complex plays a role in the inhibition of anaphase-promoting complex or cyclosome (APC/C) when spindle-assembly checkpoint is activated and inhibits the ubiquitin ligase activity of APC/C by phosphorylating its activator CDC20. In Arabidopsis thaliana (Mouse-ear cress), this protein is Mitotic checkpoint protein BUB3.3 (BUB3.3).